A 240-amino-acid polypeptide reads, in one-letter code: Protein YIPF6 (240 aa).

At M1–D91 the chain is on the cytoplasmic side. A helical transmembrane segment spans residues W92 to S112. Residues A113–E125 are Lumenal-facing. A helical membrane pass occupies residues V126–G146. Residues T147–S149 lie on the Cytoplasmic side of the membrane. Residues F150–V170 form a helical membrane-spanning segment. Topologically, residues C171–R172 are lumenal. The helical transmembrane segment at I173–A193 threads the bilayer. Residues S194 to K215 are Cytoplasmic-facing. The helical transmembrane segment at A216–F236 threads the bilayer. The Lumenal portion of the chain corresponds to S237–H240.

Belongs to the YIP1 family.

Its subcellular location is the golgi apparatus membrane. This chain is Protein YIPF6 (yipf6), found in Danio rerio (Zebrafish).